A 328-amino-acid polypeptide reads, in one-letter code: 4-hydroxy-2-oxoglutarate aldolase, mitochondrial (328 aa).

The transit peptide at 1–26 (MFGRTLFPARVIALGSGLFRTPLRTL) directs the protein to the mitochondrion. 76 to 77 (SN) contributes to the substrate binding site. Catalysis depends on K195, which acts as the Schiff-base intermediate with substrate. S197 and G221 together coordinate substrate.

It belongs to the DapA family. Homotetramer.

The protein localises to the mitochondrion. It catalyses the reaction (4S)-4-hydroxy-2-oxoglutarate = glyoxylate + pyruvate. The enzyme catalyses (4R)-4-hydroxy-2-oxoglutarate = glyoxylate + pyruvate. With respect to regulation, inhibited by divalent cations. Its function is as follows. Catalyzes the final step in the metabolic pathway of hydroxyproline. In Xenopus tropicalis (Western clawed frog), this protein is 4-hydroxy-2-oxoglutarate aldolase, mitochondrial (hoga1).